The primary structure comprises 243 residues: 3-deoxy-manno-octulosonate cytidylyltransferase (243 aa).

It belongs to the KdsB family.

It localises to the cytoplasm. The enzyme catalyses 3-deoxy-alpha-D-manno-oct-2-ulosonate + CTP = CMP-3-deoxy-beta-D-manno-octulosonate + diphosphate. It participates in nucleotide-sugar biosynthesis; CMP-3-deoxy-D-manno-octulosonate biosynthesis; CMP-3-deoxy-D-manno-octulosonate from 3-deoxy-D-manno-octulosonate and CTP: step 1/1. In terms of biological role, activates KDO (a required 8-carbon sugar) for incorporation into bacterial lipopolysaccharide in Gram-negative bacteria. This chain is 3-deoxy-manno-octulosonate cytidylyltransferase, found in Wigglesworthia glossinidia brevipalpis.